The chain runs to 406 residues: Leu/Ile/Val-binding protein homolog 5 (406 aa).

The signal sequence occupies residues 1–29 (MIGTRLPAWTRVLACGVAGLSLMTISAKA).

The protein belongs to the leucine-binding protein family.

Functionally, component of an amino-acid transport system. In Brucella abortus (strain 2308), this protein is Leu/Ile/Val-binding protein homolog 5.